We begin with the raw amino-acid sequence, 260 residues long: uncharacterized protein (260 aa).

Residues 214 to 252 (IHQFIETEIERIMEAAKELKAEKKDMTSELNRLLLNTVE) adopt a coiled-coil conformation.

This is an uncharacterized protein from Bacillus subtilis (strain 168).